The sequence spans 130 residues: Large ribosomal subunit protein eL32 (130 aa).

Belongs to the eukaryotic ribosomal protein eL32 family.

The sequence is that of Large ribosomal subunit protein eL32 (rpl32e) from Pyrococcus abyssi (strain GE5 / Orsay).